The primary structure comprises 480 residues: tRNA-2-methylthio-N(6)-dimethylallyladenosine synthase (480 aa).

An MTTase N-terminal domain is found at 31 to 151 (RGLHVITWGC…LPEMVARAAR (121 aa)). Residues cysteine 40, cysteine 76, cysteine 114, cysteine 192, cysteine 196, and cysteine 199 each contribute to the [4Fe-4S] cluster site. One can recognise a Radical SAM core domain in the interval 178–410 (SPGGITSFLT…QALLRTQQDA (233 aa)). Residues 413 to 475 (DGTVGHVVPV…TNSLSGTLVQ (63 aa)) form the TRAM domain.

The protein belongs to the methylthiotransferase family. MiaB subfamily. In terms of assembly, monomer. [4Fe-4S] cluster serves as cofactor.

It localises to the cytoplasm. The catalysed reaction is N(6)-dimethylallyladenosine(37) in tRNA + (sulfur carrier)-SH + AH2 + 2 S-adenosyl-L-methionine = 2-methylsulfanyl-N(6)-dimethylallyladenosine(37) in tRNA + (sulfur carrier)-H + 5'-deoxyadenosine + L-methionine + A + S-adenosyl-L-homocysteine + 2 H(+). Functionally, catalyzes the methylthiolation of N6-(dimethylallyl)adenosine (i(6)A), leading to the formation of 2-methylthio-N6-(dimethylallyl)adenosine (ms(2)i(6)A) at position 37 in tRNAs that read codons beginning with uridine. This chain is tRNA-2-methylthio-N(6)-dimethylallyladenosine synthase, found in Gluconacetobacter diazotrophicus (strain ATCC 49037 / DSM 5601 / CCUG 37298 / CIP 103539 / LMG 7603 / PAl5).